The primary structure comprises 65 residues: Large ribosomal subunit protein bL35 (65 aa).

Belongs to the bacterial ribosomal protein bL35 family.

The sequence is that of Large ribosomal subunit protein bL35 from Thermotoga maritima (strain ATCC 43589 / DSM 3109 / JCM 10099 / NBRC 100826 / MSB8).